The primary structure comprises 181 residues: Probable cobalt-precorrin-6B C(15)-methyltransferase (decarboxylating) (181 aa).

S-adenosyl-L-methionine is bound by residues Thr-16, 40 to 44 (GCGSG), Asp-61, and Ala-89.

This sequence belongs to the methyltransferase superfamily. Archaeal-type CbiT family.

It catalyses the reaction Co-precorrin-6B + S-adenosyl-L-methionine = Co-precorrin-7 + S-adenosyl-L-homocysteine + CO2. Its pathway is cofactor biosynthesis; adenosylcobalamin biosynthesis; cob(II)yrinate a,c-diamide from sirohydrochlorin (anaerobic route): step 8/10. In terms of biological role, catalyzes the methylation of C-15 in cobalt-precorrin-6B followed by the decarboxylation of C-12 to form cobalt-precorrin-7. The protein is Probable cobalt-precorrin-6B C(15)-methyltransferase (decarboxylating) of Methanococcus maripaludis (strain C7 / ATCC BAA-1331).